The primary structure comprises 393 residues: 2,3,4,5-tetrahydropyridine-2,6-dicarboxylate N-succinyltransferase (393 aa).

The active-site Acyl-anhydride intermediate is Glu261. Succinyl-CoA is bound by residues Arg263, Gly278, Ser281, Ala304, 319–320, Gly327, Lys356, and 369–372; these read DA and RQDS.

It belongs to the type 2 tetrahydrodipicolinate N-succinyltransferase family. As to quaternary structure, homotrimer.

It localises to the cytoplasm. It carries out the reaction (S)-2,3,4,5-tetrahydrodipicolinate + succinyl-CoA + H2O = (S)-2-succinylamino-6-oxoheptanedioate + CoA. It functions in the pathway amino-acid biosynthesis; L-lysine biosynthesis via DAP pathway; LL-2,6-diaminopimelate from (S)-tetrahydrodipicolinate (succinylase route): step 1/3. Its function is as follows. Catalyzes the conversion of the cyclic tetrahydrodipicolinate (THDP) into the acyclic N-succinyl-L-2-amino-6-oxopimelate using succinyl-CoA. The protein is 2,3,4,5-tetrahydropyridine-2,6-dicarboxylate N-succinyltransferase of Nitratiruptor sp. (strain SB155-2).